We begin with the raw amino-acid sequence, 1411 residues long: Zinc finger protein 609 (1411 aa).

Disordered regions lie at residues 1–26 (MSLS…SGDE), 47–190 (QKLE…QPVP), 353–484 (PRFC…EPTV), 517–659 (AHAH…ARPI), 679–963 (ASPG…VIQQ), 1005–1125 (YEEQ…RQAE), 1153–1221 (KSED…LTQH), and 1270–1367 (GSKV…STHH). Serine 358, serine 361, and serine 379 each carry phosphoserine. Residues 377–401 (PNSNTPVNETATASDSKGTSNSSKT) show a composition bias toward polar residues. Threonine 381 carries the phosphothreonine modification. Residues serine 413, serine 433, serine 446, serine 452, serine 467, and serine 470 each carry the phosphoserine modification. Residues 423 to 437 (ASSTSEDVKASPSSA) show a composition bias toward polar residues. A Glycyl lysine isopeptide (Lys-Gly) (interchain with G-Cter in SUMO2) cross-link involves residue lysine 479. The C2H2-type zinc finger occupies 495 to 520 (IDCPHPNCNKKYKHINGLKYHQAHAH). A compositionally biased stretch (basic and acidic residues) spans 519-529 (AHTDDDSKPEA). At serine 533 the chain carries Phosphoserine. The segment covering 549-563 (NGASVSQKGSLSPAR) has biased composition (polar residues). Serine 576 and serine 578 each carry phosphoserine. Residues 626 to 649 (SLERKCMEKEKCKKPSSLKPEKIP) show a composition bias toward basic and acidic residues. The segment covering 679-700 (ASPGSSSGLTATVAQAMPNSPQ) has biased composition (polar residues). The span at 726–736 (DKKKKDKKKKE) shows a compositional bias: basic residues. The residue at position 743 (serine 743) is a Phosphoserine. Threonine 746 bears the Phosphothreonine mark. Positions 751-764 (CRAEEGKSPFRESS) are enriched in basic and acidic residues. Residue serine 758 is modified to Phosphoserine. A Glycyl lysine isopeptide (Lys-Gly) (interchain with G-Cter in SUMO2) cross-link involves residue lysine 789. The span at 798–844 (FTDNAPSPSIGGSSRLENTTPTQPLTPLHVVTQNGAEASSVKTNSPA) shows a compositional bias: polar residues. Serine 804 bears the Phosphoserine mark. Phosphothreonine is present on threonine 823. A phosphoserine mark is found at serine 842, serine 846, and serine 849. Residues 855-876 (GEGKVDSVKSKDAEQLVKEGAK) show a composition bias toward basic and acidic residues. Low complexity predominate over residues 897–908 (SYYSPSYAQSSP). Residues 926–950 (TKRDEEPESIEGKVKNDICEEKKPE) are compositionally biased toward basic and acidic residues. Residues 952–963 (SSSSQQPSVIQQ) are compositionally biased toward low complexity. Basic and acidic residues predominate over residues 1020–1042 (GVDKKAEMGLKEREAALKEEWKQ). Serine 1055 is modified (phosphoserine). A Glycyl lysine isopeptide (Lys-Gly) (interchain with G-Cter in SUMO2) cross-link involves residue lysine 1061. Basic and acidic residues-rich tracts occupy residues 1097–1113 (LKVK…EASE), 1153–1187 (KSED…KEST), and 1195–1208 (TSEE…EPRP). Lysine 1153 participates in a covalent cross-link: Glycyl lysine isopeptide (Lys-Gly) (interchain with G-Cter in SUMO2). Polar residues predominate over residues 1286-1296 (PSVTCKSSSES). Residue lysine 1297 forms a Glycyl lysine isopeptide (Lys-Gly) (interchain with G-Cter in SUMO2) linkage. Residues 1328-1337 (GCGVVGGGGS) are compositionally biased toward gly residues.

Interacts (via N-terminus) with NIPBL. Interacts with INTS13; promoting association with the integrator complex. In terms of tissue distribution, isoform 1: Expressed in myoblasts and myotubes. Isoform 2: Expressed in myoblasts and myotubes, with a preference in undifferentiated myoblasts.

It is found in the nucleus. Transcription factor, which activates RAG1, and possibly RAG2, transcription. Through the regulation of RAG1/2 expression, may regulate thymocyte maturation. Along with NIPBL and the multiprotein complex Integrator, promotes cortical neuron migration during brain development by regulating the transcription of crucial genes in this process. Preferentially binds promoters containing paused RNA polymerase II. Up-regulates the expression of SEMA3A, NRP1, PLXND1 and GABBR2 genes, among others. In terms of biological role, involved in the regulation of myoblast proliferation during myogenesis. The sequence is that of Zinc finger protein 609 from Homo sapiens (Human).